A 166-amino-acid chain; its full sequence is Ribosome maturation factor RimM (166 aa).

The PRC barrel domain maps to 90 to 165 (NDNDAFSIFY…IITLKNIEGL (76 aa)).

The protein belongs to the RimM family. In terms of assembly, binds ribosomal protein uS19.

Its subcellular location is the cytoplasm. Its function is as follows. An accessory protein needed during the final step in the assembly of 30S ribosomal subunit, possibly for assembly of the head region. Essential for efficient processing of 16S rRNA. May be needed both before and after RbfA during the maturation of 16S rRNA. It has affinity for free ribosomal 30S subunits but not for 70S ribosomes. The polypeptide is Ribosome maturation factor RimM (Mesoplasma florum (strain ATCC 33453 / NBRC 100688 / NCTC 11704 / L1) (Acholeplasma florum)).